The following is a 291-amino-acid chain: 4-hydroxy-tetrahydrodipicolinate synthase (291 aa).

Residue Thr44 participates in pyruvate binding. The Proton donor/acceptor role is filled by Tyr132. The active-site Schiff-base intermediate with substrate is the Lys160. Ile202 serves as a coordination point for pyruvate.

This sequence belongs to the DapA family. As to quaternary structure, homotetramer; dimer of dimers.

The protein localises to the cytoplasm. The catalysed reaction is L-aspartate 4-semialdehyde + pyruvate = (2S,4S)-4-hydroxy-2,3,4,5-tetrahydrodipicolinate + H2O + H(+). It participates in amino-acid biosynthesis; L-lysine biosynthesis via DAP pathway; (S)-tetrahydrodipicolinate from L-aspartate: step 3/4. Its function is as follows. Catalyzes the condensation of (S)-aspartate-beta-semialdehyde [(S)-ASA] and pyruvate to 4-hydroxy-tetrahydrodipicolinate (HTPA). This chain is 4-hydroxy-tetrahydrodipicolinate synthase, found in Syntrophobacter fumaroxidans (strain DSM 10017 / MPOB).